The sequence spans 69 residues: NAD(P)H-quinone oxidoreductase subunit L (69 aa).

A run of 2 helical transmembrane segments spans residues 5–25 (LILL…ITYF) and 40–60 (GFMY…SPFL).

It belongs to the complex I NdhL subunit family. In terms of assembly, NDH-1 can be composed of about 15 different subunits; different subcomplexes with different compositions have been identified which probably have different functions.

It localises to the cellular thylakoid membrane. The catalysed reaction is a plastoquinone + NADH + (n+1) H(+)(in) = a plastoquinol + NAD(+) + n H(+)(out). It carries out the reaction a plastoquinone + NADPH + (n+1) H(+)(in) = a plastoquinol + NADP(+) + n H(+)(out). NDH-1 shuttles electrons from an unknown electron donor, via FMN and iron-sulfur (Fe-S) centers, to quinones in the respiratory and/or the photosynthetic chain. The immediate electron acceptor for the enzyme in this species is believed to be plastoquinone. Couples the redox reaction to proton translocation, and thus conserves the redox energy in a proton gradient. Cyanobacterial NDH-1 also plays a role in inorganic carbon-concentration. The chain is NAD(P)H-quinone oxidoreductase subunit L from Acaryochloris marina (strain MBIC 11017).